The primary structure comprises 468 residues: Probable Xaa-Pro aminopeptidase PEPP (468 aa).

Residues D264, D275, E398, and E438 each contribute to the Mn(2+) site.

It belongs to the peptidase M24B family. It depends on Mn(2+) as a cofactor.

It carries out the reaction Release of any N-terminal amino acid, including proline, that is linked to proline, even from a dipeptide or tripeptide.. Catalyzes the removal of a penultimate prolyl residue from the N-termini of peptides. In Paracoccidioides brasiliensis (strain Pb18), this protein is Probable Xaa-Pro aminopeptidase PEPP (PEPP).